The primary structure comprises 195 residues: Ubiquitin-conjugating enzyme E2 T (195 aa).

A UBC core domain is found at 2-152 (QRTSRLKREL…ARQWTEKHAR (151 aa)). C86 acts as the Glycyl thioester intermediate in catalysis. A Glycyl lysine isopeptide (Lys-Gly) (interchain with G-Cter in ubiquitin) cross-link involves residue K91. Over residues 146–157 (WTEKHARQKTDE) the composition is skewed to basic and acidic residues. Residues 146 to 195 (WTEKHARQKTDEEGMPGSLPEVGGSEGPSAAQKRKAGQLSSGGKRFCPDV) form a disordered region. Residue K180 forms a Glycyl lysine isopeptide (Lys-Gly) (interchain with G-Cter in ubiquitin) linkage. Residue K189 forms a Glycyl lysine isopeptide (Lys-Gly) (interchain with G-Cter in SUMO2) linkage.

This sequence belongs to the ubiquitin-conjugating enzyme family. Interacts with FANCL and BRCA1. Post-translationally, auto-ubiquitinated. Effects of auto-monoubiquitination at Lys-91 and Lys-180 are unclear.

The protein resides in the nucleus. The catalysed reaction is S-ubiquitinyl-[E1 ubiquitin-activating enzyme]-L-cysteine + [E2 ubiquitin-conjugating enzyme]-L-cysteine = [E1 ubiquitin-activating enzyme]-L-cysteine + S-ubiquitinyl-[E2 ubiquitin-conjugating enzyme]-L-cysteine.. It participates in protein modification; protein ubiquitination. In terms of biological role, accepts ubiquitin from the E1 complex and catalyzes its covalent attachment to other proteins. Catalyzes monoubiquitination. Involved in mitomycin-C (MMC)-induced DNA repair: acts as a specific E2 ubiquitin-conjugating enzyme for the Fanconi anemia complex by associating with E3 ubiquitin-protein ligase FANCL and catalyzing monoubiquitination of FANCD2, a key step in the DNA damage pathway. Also mediates monoubiquitination of FANCL and FANCI. May contribute to ubiquitination and degradation of BRCA1. In vitro able to promote polyubiquitination using all 7 ubiquitin Lys residues, but may prefer 'Lys-11'-, 'Lys-27'-, 'Lys-48'- and 'Lys-63'-linked polyubiquitination. This chain is Ubiquitin-conjugating enzyme E2 T (UBE2T), found in Bos taurus (Bovine).